Here is a 291-residue protein sequence, read N- to C-terminus: GTPase Era (291 aa).

Residues lysine 2–glutamate 167 enclose the Era-type G domain. Residues glycine 10 to serine 17 are G1. Glycine 10–serine 17 serves as a coordination point for GTP. The segment at asparagine 36–arginine 40 is G2. A G3 region spans residues aspartate 57 to glycine 60. GTP contacts are provided by residues aspartate 57 to leucine 61 and asparagine 116 to aspartate 119. The G4 stretch occupies residues asparagine 116 to aspartate 119. The interval tyrosine 146–serine 148 is G5. The 89-residue stretch at tyrosine 186–lysine 274 folds into the KH type-2 domain.

The protein belongs to the TRAFAC class TrmE-Era-EngA-EngB-Septin-like GTPase superfamily. Era GTPase family. Monomer.

The protein resides in the cytoplasm. Its subcellular location is the cell inner membrane. Functionally, an essential GTPase that binds both GDP and GTP, with rapid nucleotide exchange. Plays a role in 16S rRNA processing and 30S ribosomal subunit biogenesis and possibly also in cell cycle regulation and energy metabolism. The chain is GTPase Era from Campylobacter jejuni subsp. doylei (strain ATCC BAA-1458 / RM4099 / 269.97).